The chain runs to 101 residues: uncharacterized protein (101 aa).

Transmembrane regions (helical) follow at residues 20–40, 59–79, and 81–101; these read KHFI…LLGL, GVIA…MYIA, and SEMW…ALFF.

The protein resides in the endoplasmic reticulum. It localises to the membrane. This is an uncharacterized protein from Saccharomyces cerevisiae (strain ATCC 204508 / S288c) (Baker's yeast).